A 347-amino-acid chain; its full sequence is NADH-ubiquinone oxidoreductase chain 2 (347 aa).

A run of 11 helical transmembrane segments spans residues 3-23 (PPIL…VLMS), 25-45 (HWLM…PILM), 59-79 (YFLT…INLM), 96-116 (TMMT…FWVP), 122-142 (VHMS…LLVL), 149-169 (IDPN…GWGG), 178-198 (ILAY…LYNP), 200-220 (MMLL…MLFM), 242-262 (SLIL…GFIP), 274-294 (EMII…YFYM), and 323-343 (MILL…TPLL).

It belongs to the complex I subunit 2 family. In terms of assembly, core subunit of respiratory chain NADH dehydrogenase (Complex I) which is composed of 45 different subunits. Interacts with TMEM242.

The protein localises to the mitochondrion inner membrane. The enzyme catalyses a ubiquinone + NADH + 5 H(+)(in) = a ubiquinol + NAD(+) + 4 H(+)(out). Functionally, core subunit of the mitochondrial membrane respiratory chain NADH dehydrogenase (Complex I) that is believed to belong to the minimal assembly required for catalysis. Complex I functions in the transfer of electrons from NADH to the respiratory chain. The immediate electron acceptor for the enzyme is believed to be ubiquinone. The polypeptide is NADH-ubiquinone oxidoreductase chain 2 (Suricata suricatta (Meerkat)).